The following is a 214-amino-acid chain: Histone H1.1 (214 aa).

The segment at 1–43 is disordered; the sequence is MSETAPVPQPASVAPEKPAATKKTRKPAKAAVPRKKPAGPSVS. The residue at position 2 (Ser2) is an N-acetylserine. A phosphoserine mark is found at Ser2 and Ser12. Position 17 is an N6-acetyllysine (Lys17). Residues 20-37 show a composition bias toward basic residues; sequence ATKKTRKPAKAAVPRKKP. Lys36 carries the post-translational modification N6-(beta-hydroxybutyryl)lysine. The 74-residue stretch at 38 to 111 folds into the H15 domain; it reads AGPSVSELIV…GAAGSFKLNK (74 aa). Phosphoserine is present on Ser43. An N6-(beta-hydroxybutyryl)lysine modification is found at Lys54. At Arg56 the chain carries Citrulline. N6-(beta-hydroxybutyryl)lysine is present on Lys66. A Phosphoserine modification is found at Ser67. Lys77 is modified (N6-acetyllysine). Lys87 is modified (N6-(beta-hydroxybutyryl)lysine). Lys92 is modified (N6-(beta-hydroxybutyryl)lysine; alternate). Position 92 is an N6-acetyllysine; alternate (Lys92). Residues 93 to 214 are disordered; it reads GTLVQTKGTG…KPKKAAPKKK (122 aa). A Phosphoserine modification is found at Ser106. Lys108 is subject to N6-(beta-hydroxybutyryl)lysine. Residues 116-144 are compositionally biased toward low complexity; it reads KASTTKVTVKAKASGAAKKPKKTAGAAAK. The residue at position 121 (Lys121) is an N6-acetyllysine. Composition is skewed to basic residues over residues 145–179 and 186–214; these read KTVKTPKKPKKPAVSKKTSSKSPKKPKVVKAKKVA and KAVKPKAAKVKVTKPKTPAKPKKAAPKKK. A Phosphothreonine modification is found at Thr202.

The protein belongs to the histone H1/H5 family. In terms of assembly, interacts with DFFB. H1 histones are progressively phosphorylated during the cell cycle, becoming maximally phosphorylated during late G2 phase and M phase, and being dephosphorylated sharply thereafter. Post-translationally, citrullination at Arg-56 (H1R54ci) by PADI4 takes place within the DNA-binding site of H1 and results in its displacement from chromatin and global chromatin decondensation, thereby promoting pluripotency and stem cell maintenance.

The protein resides in the nucleus. Its subcellular location is the chromosome. In terms of biological role, H1 histones bind to linker DNA between nucleosomes forming the macromolecular structure known as the chromatin fiber. H1 histones are necessary for the condensation of nucleosome chains into higher-order structured fibers. Also acts as a regulator of individual gene transcription through chromatin remodeling. This chain is Histone H1.1, found in Rattus norvegicus (Rat).